The chain runs to 315 residues: MLKMESTQQMAVSIINSSFEAAVVAATSALENMGIEYDYQDIYSRVKNKFDFVMDDSGVKNNPIGKAITIDQALNNKFGSAIRNRNWLADTSRPAKLDEDVNKLRMMLSSKGIDQKMRVLNACFSVKRIPGKSSSIIKCTKLMRDKLERGEVEVDDSFVDEKMEVDTIDWKSRYEQLEQRFESLKSRVNEKYNNWVLKARKMNENMHSLQNVIPQQQAHIAELQVYNNKLERDLQNKIGSLTSSIEWYLRSMELDPEIKADIEQQINSIDAINPLHAFDDLESVIRNLISDYDKLFLMFKGLIQRCNYQYSFGCE.

An RNA-binding region spans residues Met1–Arg149. The segment at Gly150–Met206 is dimerization. Residues Asp166 to Lys237 are a coiled coil. The segment at Trp170 to Leu234 is interaction with host ZC3H7B. The interval Ser208 to Glu315 is interaction with host EIF4G1.

Belongs to the rotavirus NSP3 family. In terms of assembly, homodimer. Interacts (via the coiled-coil region) with host ZC3H7B (via LD motif). Interacts with host EIF4G1.

It is found in the host cytoplasm. In terms of biological role, plays an important role in stimulating the translation of viral mRNAs. These mRNAs are capped but not polyadenylated, instead terminating in a conserved sequence 'GACC' at the 3' that is recognized by NSP3, which competes with host PABPC1 for EIF4G1 binding. The interaction between NSP3 and host EIF4G1 stabilizes the EIF4E-EIF4G1 interaction, thereby facilitating the initiation of capped mRNA translation. This is Non-structural protein 3 from Macaca mulatta (Rhesus macaque).